Here is a 603-residue protein sequence, read N- to C-terminus: Prostaglandin G/H synthase 2 (603 aa).

Positions 1–17 (MLLPCALLAALLAAGHA) are cleaved as a signal peptide. The region spanning 18–55 (ANPCCSLPCQNRGVCMTTGFDRYECDCTRTGYYGENCT) is the EGF-like domain. Cystine bridges form between Cys-21–Cys-32, Cys-22–Cys-145, Cys-26–Cys-42, and Cys-44–Cys-54. N-linked (GlcNAc...) asparagine glycosylation is found at Asn-53 and Asn-90. Arg-106 provides a ligand contact to substrate. A glycan (N-linked (GlcNAc...) asparagine) is linked at Asn-130. The Proton acceptor role is filled by His-193. Tyr-341 provides a ligand contact to substrate. Tyr-371 functions as the For cyclooxygenase activity in the catalytic mechanism. Heme b is bound at residue His-374. A disulfide bridge connects residues Cys-555 and Cys-561.

The protein belongs to the prostaglandin G/H synthase family. Homodimer. Heme b is required as a cofactor.

Its subcellular location is the microsome membrane. It localises to the endoplasmic reticulum membrane. It catalyses the reaction (5Z,8Z,11Z,14Z)-eicosatetraenoate + AH2 + 2 O2 = prostaglandin H2 + A + H2O. It carries out the reaction (9Z,12Z)-octadecadienoate + AH2 + O2 = (9R)-hydroxy-(10E,12Z)-octadecadienoate + A + H2O. The enzyme catalyses (9Z,12Z)-octadecadienoate + AH2 + O2 = (9S)-hydroxy-(10E,12Z)-octadecadienoate + A + H2O. The catalysed reaction is (9Z,12Z)-octadecadienoate + AH2 + O2 = (13S)-hydroxy-(9Z,11E)-octadecadienoate + A + H2O. It catalyses the reaction (9Z,12Z)-octadecadienoate + AH2 + O2 = (13R)-hydroxy-(9Z,11E)-octadecadienoate + A + H2O. It functions in the pathway lipid metabolism; prostaglandin biosynthesis. In terms of biological role, dual cyclooxygenase and peroxidase in the biosynthesis pathway of prostanoids, a class of C20 oxylipins mainly derived from arachidonate ((5Z,8Z,11Z,14Z)-eicosatetraenoate, AA, C20:4(n-6)), with a particular role in the inflammatory response. The cyclooxygenase activity oxygenates AA to the hydroperoxy endoperoxide prostaglandin G2 (PGG2), and the peroxidase activity reduces PGG2 to the hydroxy endoperoxide prostaglandin H2 (PGH2), the precursor of all 2-series prostaglandins and thromboxanes. This complex transformation is initiated by abstraction of hydrogen at carbon 13 (with S-stereochemistry), followed by insertion of molecular O2 to form the endoperoxide bridge between carbon 9 and 11 that defines prostaglandins. The insertion of a second molecule of O2 (bis-oxygenase activity) yields a hydroperoxy group in PGG2 that is then reduced to PGH2 by two electrons. Similarly catalyzes successive cyclooxygenation and peroxidation of dihomo-gamma-linoleate (DGLA, C20:3(n-6)) and eicosapentaenoate (EPA, C20:5(n-3)) to corresponding PGH1 and PGH3, the precursors of 1- and 3-series prostaglandins. In an alternative pathway of prostanoid biosynthesis, converts 2-arachidonoyl lysophopholipids to prostanoid lysophopholipids, which are then hydrolyzed by intracellular phospholipases to release free prostanoids. Metabolizes 2-arachidonoyl glycerol yielding the glyceryl ester of PGH2, a process that can contribute to pain response. Generates lipid mediators from n-3 and n-6 polyunsaturated fatty acids (PUFAs) via a lipoxygenase-type mechanism. Oxygenates PUFAs to hydroperoxy compounds and then reduces them to corresponding alcohols. Plays a role in the generation of resolution phase interaction products (resolvins) during both sterile and infectious inflammation. Metabolizes docosahexaenoate (DHA, C22:6(n-3)) to 17R-HDHA, a precursor of the D-series resolvins (RvDs). As a component of the biosynthetic pathway of E-series resolvins (RvEs), converts eicosapentaenoate (EPA, C20:5(n-3)) primarily to 18S-HEPE that is further metabolized by ALOX5 and LTA4H to generate 18S-RvE1 and 18S-RvE2. In vascular endothelial cells, converts docosapentaenoate (DPA, C22:5(n-3)) to 13R-HDPA, a precursor for 13-series resolvins (RvTs) shown to activate macrophage phagocytosis during bacterial infection. In activated leukocytes, contributes to oxygenation of hydroxyeicosatetraenoates (HETE) to diHETES (5,15-diHETE and 5,11-diHETE). Can also use linoleate (LA, (9Z,12Z)-octadecadienoate, C18:2(n-6)) as substrate and produce hydroxyoctadecadienoates (HODEs) in a regio- and stereospecific manner, being (9R)-HODE ((9R)-hydroxy-(10E,12Z)-octadecadienoate) and (13S)-HODE ((13S)-hydroxy-(9Z,11E)-octadecadienoate) its major products. During neuroinflammation, plays a role in neuronal secretion of specialized preresolving mediators (SPMs) 15R-lipoxin A4 that regulates phagocytic microglia. This Gallus gallus (Chicken) protein is Prostaglandin G/H synthase 2 (PTGS2).